A 492-amino-acid chain; its full sequence is Putative sucrose transport protein SUC6 (492 aa).

The segment at 1–26 is disordered; it reads MSDLQANKDAAAVNRQSSSSSADLNG. At 1-33 the chain is on the cytoplasmic side; that stretch reads MSDLQANKDAAAVNRQSSSSSADLNGPSPMRKM. Polar residues predominate over residues 14–23; that stretch reads NRQSSSSSAD. Ser-17 is modified (phosphoserine). Residues 34 to 54 traverse the membrane as a helical segment; the sequence is ISVASIAAGIQFGWALQLSLL. Over 55–68 the chain is Extracellular; the sequence is TPYVQLLGVPHKWS. The helical transmembrane segment at 69-89 threads the bilayer; that stretch reads SFIWLCGPVSGLLVQPSVGYF. Residues 90 to 101 lie on the Cytoplasmic side of the membrane; it reads SDRCKSRFGRRR. The chain crosses the membrane as a helical span at residues 102–122; sequence PFIAMGALLVAVAVVLIGYAA. Residues 123 to 139 are Extracellular-facing; that stretch reads DFGHSMGDKVDEPVKMR. The chain crosses the membrane as a helical span at residues 140 to 160; the sequence is AVVIFALGFWILDVANNTLQG. The Cytoplasmic segment spans residues 161 to 181; it reads PCRAFLGDLAAGDAKKTRTAN. Residues 182 to 202 form a helical membrane-spanning segment; that stretch reads AFFSFFMAVGNVLGYAAGSYT. Topologically, residues 203-224 are extracellular; sequence NLYKIFPFTMTKACDIYCANLK. A helical transmembrane segment spans residues 225–245; it reads SCFFLSITLLLVVTIIALWYV. The Cytoplasmic segment spans residues 246 to 277; the sequence is EDKQWSPKADSDNEKTPFFGEIFGAFKVMKRP. The chain crosses the membrane as a helical span at residues 278-298; it reads MWMLLIVTALNWIAWFPFLLY. The Extracellular segment spans residues 299 to 324; that stretch reads DTDWMGREVYGGDSKGDDKMKKLYNQ. Residues 325 to 345 form a helical membrane-spanning segment; that stretch reads GIHVGGLGLMLNSIVLGFMSL. Residues 346-359 are Cytoplasmic-facing; that stretch reads GIEGISRKMGGAKR. The chain crosses the membrane as a helical span at residues 360-380; the sequence is LWGAVNIILAVCLAMTVLVTK. Topologically, residues 381-403 are extracellular; sequence KAEEHRRIAGPMALPTDGIRAGA. The chain crosses the membrane as a helical span at residues 404-424; the sequence is LTLFALLGIPLAITFSIPFAL. Residues 425 to 446 are Cytoplasmic-facing; sequence ASIISSSSGAGQGLSLGVLNMT. Residues 447-467 form a helical membrane-spanning segment; the sequence is IVIPQMVVSFGVGPIDALFGG. Over 468-469 the chain is Extracellular; sequence GN. The chain crosses the membrane as a helical span at residues 470 to 490; it reads LPGFVVGAIAAAISSVVAFSV. Residues 491–492 lie on the Cytoplasmic side of the membrane; the sequence is LP.

Belongs to the glycoside-pentoside-hexuronide (GPH) cation symporter transporter (TC 2.A.2.4) family.

It is found in the cell membrane. It functions in the pathway glycan biosynthesis; sucrose metabolism. Functionally, may be responsible for the transport of glucosides into the cell, with the concomitant uptake of protons (symport system). Does not seem to transport sucrose. The protein is Putative sucrose transport protein SUC6 of Arabidopsis thaliana (Mouse-ear cress).